Reading from the N-terminus, the 305-residue chain is MKASVSLLLLSAASMASAAMSVSQCAQMCLSNMKAKAGELGCSAGDDKCLCSQANYGYGIRDCTTEACPDDDAIAVLSSALSSCPSDSAAVTATGAGGSSSGSGSGSDSGSGSGSGSGSGSGSGSGSGSSSGSGSGSGSGSGSGSGSNSGSGSASSTATGTATGTATGTATGTATGTATGSENSTTGGAGAGAGAGASSTGTNASGTGATTSGANPSNTGATTTDTTLTTTTTSSENGSSTGNSSSETGAGSGSSTATGSGSGSGAGSASTTAPNSSSTGNVAPRGAVVGSGAVGALALAALIIL.

A signal peptide spans 1–18 (MKASVSLLLLSAASMASA). One can recognise a CFEM domain in the interval 19 to 111 (AMSVSQCAQM…GSGSGSDSGS (93 aa)). Disulfide bonds link C25–C68, C29–C63, C42–C49, and C51–C84. D46 lines the heme pocket. The tract at residues 92-287 (TATGAGGSSS…STGNVAPRGA (196 aa)) is disordered. The segment covering 95–149 (GAGGSSSGSGSGSDSGSGSGSGSGSGSGSGSGSGSSSGSGSGSGSGSGSGSGSNS) has biased composition (gly residues). 3 stretches are compositionally biased toward low complexity: residues 150–186 (GSGS…NSTT), 196–259 (GASS…TATG), and 267–287 (GSAS…PRGA). N-linked (GlcNAc...) asparagine glycans are attached at residues N183, N203, N237, N243, and N275. S276 is lipidated: GPI-like-anchor amidated serine. Positions 277–305 (SSTGNVAPRGAVVGSGAVGALALAALIIL) are cleaved as a propeptide — removed in mature form.

It belongs to the RBT5 family. In terms of processing, the GPI-like anchor contains a phosphoceramide lipid group. The GPI-anchor is attached to the protein in the endoplasmic reticulum and serves to target the protein to the cell surface. There, the glucosamine-inositol phospholipid moiety is cleaved off and the GPI-modified mannoprotein is covalently attached via its lipidless GPI glycan remnant to the 1,6-beta-glucan of the outer cell wall layer.

Its subcellular location is the secreted. The protein localises to the cell wall. It is found in the cell membrane. GPI-anchored cell wall protein involved in stabilizing the cell wall. Not implicated in virulence, heme uptake and biofilm formation. The polypeptide is GPI-anchored hemophore cfmA (Aspergillus fumigatus (strain ATCC MYA-4609 / CBS 101355 / FGSC A1100 / Af293) (Neosartorya fumigata)).